The primary structure comprises 130 residues: Small ribosomal subunit protein uS8 (130 aa).

Belongs to the universal ribosomal protein uS8 family. Part of the 30S ribosomal subunit. Contacts proteins S5 and S12.

Its function is as follows. One of the primary rRNA binding proteins, it binds directly to 16S rRNA central domain where it helps coordinate assembly of the platform of the 30S subunit. The protein is Small ribosomal subunit protein uS8 of Onion yellows phytoplasma (strain OY-M).